The primary structure comprises 474 residues: Glutamate--tRNA ligase (474 aa).

A 'HIGH' region motif is present at residues 9–19 (PSPTGYLHVGG). Positions 240 to 244 (KLSKR) match the 'KMSKS' region motif. Lys243 is an ATP binding site.

The protein belongs to the class-I aminoacyl-tRNA synthetase family. Glutamate--tRNA ligase type 1 subfamily. Monomer.

It localises to the cytoplasm. It catalyses the reaction tRNA(Glu) + L-glutamate + ATP = L-glutamyl-tRNA(Glu) + AMP + diphosphate. Functionally, catalyzes the attachment of glutamate to tRNA(Glu) in a two-step reaction: glutamate is first activated by ATP to form Glu-AMP and then transferred to the acceptor end of tRNA(Glu). This chain is Glutamate--tRNA ligase, found in Vibrio cholerae serotype O1 (strain ATCC 39315 / El Tor Inaba N16961).